Reading from the N-terminus, the 574-residue chain is Sorting nexin-33 (574 aa).

The SH3 domain occupies 1–61; sequence MALKGRALYD…PASYVEIVRP (61 aa). Ser-77 carries the phosphoserine modification. Over residues 79-90 the composition is skewed to polar residues; the sequence is GTQGSLYSSPSM. The interval 79–116 is disordered; the sequence is GTQGSLYSSPSMASPARSGGGSGFLSNPGSFEDDDDDD. Ser-92 is modified (phosphoserine). The region spanning 230-340 is the PX domain; the sequence is FACSIEDPTK…HFLSCLDDKQ (111 aa). The region spanning 371-574 is the BAR domain; sequence LQDVEDRVDT…EKTLHMYDHL (204 aa).

It belongs to the sorting nexin family. As to quaternary structure, homodimer (via BAR domain). Interacts with ADAM15. Interacts with FASLG. Interacts (via SH3 domain) with DNM1 and DNM2. Interacts with WASL. Interacts with FCHSD1 (via the F-BAR domain). Phosphorylated. Detected in brain (at protein level).

The protein localises to the cytoplasm. It is found in the cytosol. It localises to the membrane. Its subcellular location is the cytoplasmic vesicle membrane. In terms of biological role, plays a role in the reorganization of the cytoskeleton, endocytosis and cellular vesicle trafficking via its interactions with membranes, WASL, DNM1 and DNM2. Acts both during interphase and at the end of mitotic cell divisions. Required for efficient progress through mitosis and cytokinesis. Required for normal formation of the cleavage furrow at the end of mitosis. Modulates endocytosis of cell-surface proteins, such as APP and PRNP; this then modulates the secretion of APP and PRNP peptides. Promotes membrane tubulation (in vitro). May promote the formation of macropinosomes. This chain is Sorting nexin-33 (Snx33), found in Mus musculus (Mouse).